The following is a 145-amino-acid chain: Probable low molecular weight protein-tyrosine-phosphatase EpsP (145 aa).

Cysteine 9 serves as the catalytic Nucleophile. Residue arginine 15 is part of the active site. Aspartate 114 functions as the Proton donor in the catalytic mechanism.

The protein belongs to the low molecular weight phosphotyrosine protein phosphatase family.

The enzyme catalyses O-phospho-L-tyrosyl-[protein] + H2O = L-tyrosyl-[protein] + phosphate. It functions in the pathway glycan metabolism; exopolysaccharide biosynthesis. Functionally, may be involved in assembly or function of the EPS I polymerization/export complex and/or the EpsB ATPase. Alternatively it may function in the removal of the terminal phosphate from C55-isoprenyl pyrophosphate in order to recycle the C55-isoprenyl phosphate lipid carrier used in the synthesis of polysaccharide repeat units. In Ralstonia nicotianae (strain ATCC BAA-1114 / GMI1000) (Ralstonia solanacearum), this protein is Probable low molecular weight protein-tyrosine-phosphatase EpsP (epsP).